A 409-amino-acid chain; its full sequence is Wadjet protein JetD (409 aa).

Functionally, component of antiplasmid transformation system Wadjet type I, composed of JetA, JetB, JetC and JetD. Expression of Wadjet type I in B.subtilis (strain BEST7003) reduces the transformation efficiency of plasmid pHCMC05. In Bacillus cereus (strain Q1), this protein is Wadjet protein JetD.